The following is a 243-amino-acid chain: RNA-binding protein with serine-rich domain 1 homolog (243 aa).

Positions 48–92 are disordered; that stretch reads SSTRQFNNTRSPSGRSASRSSNFSHRSSSRDSFSSNRSYSSSLSR. Residues 57–92 are compositionally biased toward low complexity; that stretch reads RSPSGRSASRSSNFSHRSSSRDSFSSNRSYSSSLSR. One can recognise an RRM domain in the interval 99 to 177; sequence RTILVENLTR…EELFVSIKRF (79 aa). A disordered region spans residues 189–243; it reads YENSYRPSRSQNNSHYNDKSFHRSRYSRARSRSPGSNISEYSDQSPPYHSYRHRP. Residues 193–203 show a composition bias toward polar residues; the sequence is YRPSRSQNNSH. Residues 210-219 are compositionally biased toward basic residues; sequence HRSRYSRARS. The span at 222 to 235 shows a compositional bias: polar residues; it reads PGSNISEYSDQSPP.

This sequence belongs to the splicing factor SR family. As to quaternary structure, component of the active spliceosome.

The protein resides in the cytoplasm. Its subcellular location is the nucleus. Its function is as follows. Putative component of the spliceosome which enhances the formation of the ATP-dependent A complex of the spliceosome. may participate in mRNA 3'-end cleavage. Also mediates increase of mRNA abundance and translational efficiency. This is RNA-binding protein with serine-rich domain 1 homolog from Schizosaccharomyces pombe (strain 972 / ATCC 24843) (Fission yeast).